The sequence spans 117 residues: Glycoprotein hormones alpha chain (117 aa).

The N-terminal stretch at 1 to 23 (MGSVKSAGLSLLLLSFLLYVADS) is a signal peptide. Intrachain disulfides connect Cys-34–Cys-57, Cys-37–Cys-86, Cys-54–Cys-107, Cys-58–Cys-109, and Cys-85–Cys-112. N-linked (GlcNAc...) asparagine glycans are attached at residues Asn-78 and Asn-103.

The protein belongs to the glycoprotein hormones subunit alpha family. In terms of assembly, heterodimer. Glycoprotein hormones are heterodimers composed of a common alpha chain described here and a unique beta chain which confers their biological specificity to the different hormones.

Its subcellular location is the secreted. Its function is as follows. Shared alpha chain of heterodimeric glycoprotein hormones. These hormones bind specific receptors on target cells that in turn activate downstream signaling pathways. Involved in gametogenesis and steroidogenesis. This Acanthopagrus latus (Yellowfin seabream) protein is Glycoprotein hormones alpha chain (cga).